Here is a 136-residue protein sequence, read N- to C-terminus: uncharacterized protein (136 aa).

The signal sequence occupies residues 1–35 (MTHRAVPCQPRAFSKIKVLVISFLFLMVAFLPFSS).

This is an uncharacterized protein from Saccharomyces cerevisiae (strain ATCC 204508 / S288c) (Baker's yeast).